A 628-amino-acid polypeptide reads, in one-letter code: MFNLRNFDVIVVGAGHAGTEAAMASSRMGCKTLLLTQKISDLGALSCNPAIGGIGKSHLVKEIDALGGMMAKAIDYSGIQFRILNSSKGPAVRSTRAQADKILYHETVKKILKKQNNLLILEAEVKDLIFKNYSVVGVLTQNEINFYSRSVVLAAGTFLGGKIHIGLKSYSAGRIGDKSAIDLSVRLRELSLRVNRLKTGTPPRIDINTVNFNNLLIQNSDTPVPVFSFMGNVSHHPKQIPCYLTHTNEKTHEIIRKNLDKSPIYTGFLKGLGPRYCPSIEDKIVRFPDRKSHQVFLEPEGLSSIKVYPNGISTSLPIEVQEQIVASIKGLEKSKIIRPGYAIEYDFFDPKDLNLTLESKLIKGLFFAGQINGTTGYEEAASQGLLAGLNAALSSKNTEGWFPRRDQAYLGVLIDDLTTQGTEEPYRMFTSRAEYRLSLREDNADLRLTEIGRKLGLVNDSRWIRYNQKVLNIQTEMNRLKKNKISPISPDADILKKLYNINLIKEISMSELLKRPQIRYQDLQSLESFRTGIVDLEAIGQIENEIKYAGYIKRQSEEIERHLKNENTFLSSICDYNKIRGLSSEVVKKLNDYKPISIGQASRISGITPAAISILLIHLKKESYKHTL.

13 to 18 is a binding site for FAD; that stretch reads GAGHAG. 273 to 287 serves as a coordination point for NAD(+); sequence GPRYCPSIEDKIVRF.

This sequence belongs to the MnmG family. As to quaternary structure, homodimer. Heterotetramer of two MnmE and two MnmG subunits. The cofactor is FAD.

It localises to the cytoplasm. Its function is as follows. NAD-binding protein involved in the addition of a carboxymethylaminomethyl (cmnm) group at the wobble position (U34) of certain tRNAs, forming tRNA-cmnm(5)s(2)U34. In Buchnera aphidicola subsp. Acyrthosiphon pisum (strain Tuc7), this protein is tRNA uridine 5-carboxymethylaminomethyl modification enzyme MnmG.